The following is a 121-amino-acid chain: Large ribosomal subunit protein bL12 (121 aa).

The protein belongs to the bacterial ribosomal protein bL12 family. Homodimer. Part of the ribosomal stalk of the 50S ribosomal subunit. Forms a multimeric L10(L12)X complex, where L10 forms an elongated spine to which 2 to 4 L12 dimers bind in a sequential fashion. Binds GTP-bound translation factors.

Its function is as follows. Forms part of the ribosomal stalk which helps the ribosome interact with GTP-bound translation factors. Is thus essential for accurate translation. The sequence is that of Large ribosomal subunit protein bL12 from Escherichia coli O45:K1 (strain S88 / ExPEC).